The chain runs to 407 residues: TOM1-like protein 1 (407 aa).

An N-acetylglycine modification is found at Gly2. Residues 55–183 (ATTENLEEPD…SLKARGIRFP (129 aa)) form the VHS domain. The GAT domain occupies 228-315 (FTAEQTKEAF…TLSKYEEMNK (88 aa)). Residues 315 to 407 (KPSAPLTSHE…SSKNDDLIRF (93 aa)) form a disordered region. Ser337 carries the phosphoserine modification. Residues 337–347 (SPIHGREESLV) are compositionally biased toward basic and acidic residues. Residues 353–364 (VRGGFHGGGGSG) are compositionally biased toward gly residues. Residues 388–407 (PDHDPKKEQSSSKNDDLIRF) show a composition bias toward basic and acidic residues.

Belongs to the TOM1 family. As to expression, ubiquitously expressed.

The protein resides in the membrane. Might contribute to the loading of the ESCRT machinery. In Arabidopsis thaliana (Mouse-ear cress), this protein is TOM1-like protein 1.